The sequence spans 137 residues: 2-iminobutanoate/2-iminopropanoate deaminase (137 aa).

Position 2 is an N-acetylserine (Ser-2). Residues Lys-13, Lys-60, and Lys-67 each carry the N6-succinyllysine modification. The residue at position 74 (Thr-74) is a Phosphothreonine.

The protein belongs to the RutC family. In terms of assembly, homotrimer. Interacts with YTHDF2. Liver and kidney.

It localises to the cytoplasm. It is found in the nucleus. Its subcellular location is the peroxisome. The protein localises to the mitochondrion. The catalysed reaction is 2-iminobutanoate + H2O = 2-oxobutanoate + NH4(+). It carries out the reaction 2-iminopropanoate + H2O = pyruvate + NH4(+). In terms of biological role, catalyzes the hydrolytic deamination of enamine/imine intermediates that form during the course of normal metabolism. May facilitate the release of ammonia from these potentially toxic reactive metabolites, reducing their impact on cellular components. It may act on enamine/imine intermediates formed by several types of pyridoxal-5'-phosphate-dependent dehydratases including L-threonine dehydratase. Functionally, also promotes endoribonucleolytic cleavage of some transcripts by promoting recruitment of the ribonuclease P/MRP complex. Acts by bridging YTHDF2 and the ribonuclease P/MRP complex. RIDA/HRSP12 binds to N6-methyladenosine (m6A)-containing mRNAs containing a 5'-GGUUC-3' motif: cooperative binding of RIDA/HRSP12 and YTHDF2 to such transcripts lead to recruitment of the ribonuclease P/MRP complex and subsequent endoribonucleolytic cleavage. The sequence is that of 2-iminobutanoate/2-iminopropanoate deaminase from Rattus norvegicus (Rat).